A 328-amino-acid polypeptide reads, in one-letter code: AA9 family lytic polysaccharide monooxygenase A (328 aa).

The first 21 residues, 1–21 (MPSTKVAALSAVLALASTVAG), serve as a signal peptide directing secretion. Position 22 (histidine 22) interacts with Cu(2+). The residue at position 22 (histidine 22) is a Methylhistidine. 2 disulfides stabilise this stretch: cysteine 77–cysteine 199 and cysteine 118–cysteine 122. N-linked (GlcNAc...) asparagine glycosylation is present at asparagine 80. Residue histidine 107 participates in Cu(2+) binding. Residues asparagine 121 and asparagine 159 are each glycosylated (N-linked (GlcNAc...) asparagine). O2-binding residues include histidine 185 and glutamine 194. Tyrosine 196 is a binding site for Cu(2+). O-linked (Man...) serine glycosylation is found at serine 235 and serine 237. Threonine 238 and threonine 245 each carry an O-linked (Man...) threonine glycan.

The protein belongs to the polysaccharide monooxygenase AA9 family. It depends on Cu(2+) as a cofactor. Post-translationally, the catalytically essential N-terminal histidine His-22 is post-translationally modified by methylation to prevent protonation of the histidine side chain, and protect the critical active site of the enzyme from oxidative damage.

Its subcellular location is the secreted. It catalyses the reaction [(1-&gt;4)-beta-D-glucosyl]n+m + reduced acceptor + O2 = 4-dehydro-beta-D-glucosyl-[(1-&gt;4)-beta-D-glucosyl]n-1 + [(1-&gt;4)-beta-D-glucosyl]m + acceptor + H2O.. Its function is as follows. Lytic polysaccharide monooxygenase (LPMO) that depolymerizes crystalline and amorphous polysaccharides via the oxidation of scissile alpha- or beta-(1-4)-glycosidic bonds, yielding C1 and C4 oxidation products. Catalysis by LPMOs requires the reduction of the active-site copper from Cu(II) to Cu(I) by a reducing agent and H(2)O(2) or O(2) as a cosubstrate. Shows activity on cellulosic substrates (Avicel, carboxymethylcellulose) and xylan. The chain is AA9 family lytic polysaccharide monooxygenase A from Talaromyces verruculosus (Penicillium verruculosum).